Reading from the N-terminus, the 230-residue chain is Increased recombination centers protein 19 (230 aa).

It belongs to the IRC19 family.

Its function is as follows. Involved in sporulation and maintenance of the mitochondrial DNA. Is probably involved in a pathway contributing to genomic integrity. The sequence is that of Increased recombination centers protein 19 (IRC19) from Saccharomyces cerevisiae (strain ATCC 204508 / S288c) (Baker's yeast).